The primary structure comprises 337 residues: Formamidase (337 aa).

Residues 14–257 (VVIGLVQLQL…DEIITAEVRP (244 aa)) form the CN hydrolase domain. E60 serves as the catalytic Proton acceptor. K129 serves as the catalytic Proton donor. Residue C162 is the Nucleophile of the active site.

It belongs to the carbon-nitrogen hydrolase superfamily. Aliphatic amidase family.

It carries out the reaction formamide + H2O = formate + NH4(+). Its function is as follows. Is an aliphatic amidase with a restricted substrate specificity, as it only hydrolyzes formamide. The polypeptide is Formamidase (Bradyrhizobium sp. (strain ORS 278)).